The chain runs to 637 residues: Chaperone protein HtpG (637 aa).

Positions 1–334 (MQDVVNSEKL…SSDLPLNISR (334 aa)) are a; substrate-binding. The tract at residues 335–558 (ETLQNNKVIE…DGSMDIRMER (224 aa)) is b. Residues 559–637 (FLREQKQLNY…MNNVLVKVYQ (79 aa)) are c.

The protein belongs to the heat shock protein 90 family. As to quaternary structure, homodimer.

Its subcellular location is the cytoplasm. Functionally, molecular chaperone. Has ATPase activity. The chain is Chaperone protein HtpG from Ehrlichia canis (strain Jake).